The primary structure comprises 88 residues: Small ribosomal subunit protein bS20 (88 aa).

Positions 1–27 (MANIPSAKKRARQAEKRRKHNQSQRSM) are disordered. The segment covering 7–22 (AKKRARQAEKRRKHNQ) has biased composition (basic residues).

The protein belongs to the bacterial ribosomal protein bS20 family.

Binds directly to 16S ribosomal RNA. The protein is Small ribosomal subunit protein bS20 of Alkalilimnicola ehrlichii (strain ATCC BAA-1101 / DSM 17681 / MLHE-1).